Here is a 966-residue protein sequence, read N- to C-terminus: Aminopeptidase N (966 aa).

The Cytoplasmic portion of the chain corresponds to 1–8; the sequence is MAKGFYIS. Residues 9-32 traverse the membrane as a helical; Signal-anchor for type II membrane protein segment; that stretch reads KTLGILGILLGVAAVCTIIALSVV. Positions 33 to 68 are cytosolic Ser/Thr-rich junction; that stretch reads YAQEKNRNAENSATAPTLPGSTSATTATTTPAVDES. Over 33–966 the chain is Extracellular; it reads YAQEKNRNAE…VFKWFTENSS (934 aa). Residues 42–64 are disordered; that stretch reads ENSATAPTLPGSTSATTATTTPA. Residues 44-64 are compositionally biased toward low complexity; that stretch reads SATAPTLPGSTSATTATTTPA. The tract at residues 69–966 is metalloprotease; it reads KPWNQYRLPK…VFKWFTENSS (898 aa). 3 N-linked (GlcNAc...) asparagine glycosylation sites follow: Asn106, Asn114, and Asn128. Tyr176 is subject to Sulfotyrosine. N-linked (GlcNAc...) asparagine glycosylation is found at Asn234, Asn288, Asn318, and Asn332. 351–355 contacts substrate; the sequence is GAMEN. His387 serves as a coordination point for Zn(2+). The active-site Proton acceptor is Glu388. Zn(2+) contacts are provided by His391 and Glu410. 2 positions are modified to sulfotyrosine: Tyr418 and Tyr423. 4 N-linked (GlcNAc...) asparagine glycosylation sites follow: Asn573, Asn606, Asn624, and Asn734. Residues Cys760 and Cys767 are joined by a disulfide bond. N-linked (GlcNAc...) asparagine glycosylation is found at Asn784 and Asn817. Residues Cys797 and Cys833 are joined by a disulfide bond. Tyr852 is modified (phosphotyrosine).

It belongs to the peptidase M1 family. As to quaternary structure, homodimer. Interacts with SLC6A19. Requires Zn(2+) as cofactor. In terms of processing, N- and O-glycosylated. Post-translationally, sulfated. May undergo proteolysis and give rise to a soluble form. In terms of tissue distribution, expressed in the intestinal brush border (at protein level). Highly expressed in intestinal tract and kidney, present in liver, lymph node, spleen, and brain. Found as well in monocytes, macrophages, dendritic cells, veiled cells and B-cells but not on T-cells and thymocytes.

The protein localises to the cell membrane. The enzyme catalyses Release of an N-terminal amino acid, Xaa-|-Yaa- from a peptide, amide or arylamide. Xaa is preferably Ala, but may be most amino acids including Pro (slow action). When a terminal hydrophobic residue is followed by a prolyl residue, the two may be released as an intact Xaa-Pro dipeptide.. Functionally, broad specificity aminopeptidase which plays a role in the final digestion of peptides generated from hydrolysis of proteins by gastric and pancreatic proteases. Also involved in the processing of various peptides including peptide hormones, such as angiotensin III and IV, neuropeptides, and chemokines. May also be involved the cleavage of peptides bound to major histocompatibility complex class II molecules of antigen presenting cells. May have a role in angiogenesis and promote cholesterol crystallization. May have a role in amino acid transport by acting as binding partner of amino acid transporter SLC6A19 and regulating its activity. This chain is Aminopeptidase N (Anpep), found in Mus musculus (Mouse).